A 200-amino-acid chain; its full sequence is Shikimate kinase (200 aa).

33 to 38 (GAGKST) is an ATP binding site. Ser-37 is a Mg(2+) binding site. Substrate contacts are provided by Asp-55, Arg-79, and Gly-101. ATP is bound at residue Arg-139. Position 158 (Arg-158) interacts with substrate.

This sequence belongs to the shikimate kinase family. As to quaternary structure, monomer. It depends on Mg(2+) as a cofactor.

It is found in the cytoplasm. The catalysed reaction is shikimate + ATP = 3-phosphoshikimate + ADP + H(+). Its pathway is metabolic intermediate biosynthesis; chorismate biosynthesis; chorismate from D-erythrose 4-phosphate and phosphoenolpyruvate: step 5/7. Functionally, catalyzes the specific phosphorylation of the 3-hydroxyl group of shikimic acid using ATP as a cosubstrate. The chain is Shikimate kinase from Brucella abortus (strain S19).